The sequence spans 706 residues: DNA ligase (706 aa).

Residues Asp48–Asp52, Ser97–Leu98, and Glu131 each bind NAD(+). Lys133 acts as the N6-AMP-lysine intermediate in catalysis. NAD(+) is bound by residues Arg154, Glu191, Lys307, and Lys331. Residues Cys425, Cys428, Cys443, and Cys449 each contribute to the Zn(2+) site. The BRCT domain maps to Arg628–Gly706.

Belongs to the NAD-dependent DNA ligase family. LigA subfamily. Mg(2+) is required as a cofactor. Requires Mn(2+) as cofactor.

The catalysed reaction is NAD(+) + (deoxyribonucleotide)n-3'-hydroxyl + 5'-phospho-(deoxyribonucleotide)m = (deoxyribonucleotide)n+m + AMP + beta-nicotinamide D-nucleotide.. DNA ligase that catalyzes the formation of phosphodiester linkages between 5'-phosphoryl and 3'-hydroxyl groups in double-stranded DNA using NAD as a coenzyme and as the energy source for the reaction. It is essential for DNA replication and repair of damaged DNA. This is DNA ligase from Afipia carboxidovorans (strain ATCC 49405 / DSM 1227 / KCTC 32145 / OM5) (Oligotropha carboxidovorans).